The sequence spans 202 residues: Ion-translocating oxidoreductase complex subunit G (202 aa).

A helical transmembrane segment spans residues 11–31 (AILLALIALICTALSTGIYLL). Thr-177 carries the FMN phosphoryl threonine modification.

This sequence belongs to the RnfG family. In terms of assembly, the complex is composed of six subunits: RnfA, RnfB, RnfC, RnfD, RnfE and RnfG. FMN serves as cofactor.

It localises to the cell inner membrane. In terms of biological role, part of a membrane-bound complex that couples electron transfer with translocation of ions across the membrane. The sequence is that of Ion-translocating oxidoreductase complex subunit G from Pasteurella multocida (strain Pm70).